Consider the following 279-residue polypeptide: Sperm acrosome membrane-associated protein 1 (279 aa).

Residues 1 to 29 (MKSRGAGCSARLLLTVGWLLLAGLQSTCG) form the signal peptide. Residues 30–221 (INVTAIQDPS…VIICIFVIFV (192 aa)) lie on the Extracellular side of the membrane. Residue asparagine 31 is glycosylated (N-linked (GlcNAc...) asparagine). The interval 39 to 74 (SLAREGEGEPEGDEEPENDSETEKEPQAEAEDDSEG) is disordered. A compositionally biased stretch (acidic residues) spans 46 to 58 (GEPEGDEEPENDS). Residues 222–242 (LIFIIINWTAVKDFWAKASTT) traverse the membrane as a helical segment. Topologically, residues 243–279 (EIQSELSSMRYKDSTSLDQSPTDIPGHEDDALSEWNE) are cytoplasmic. The residue at position 253 (tyrosine 253) is a Phosphotyrosine. The interval 253–279 (YKDSTSLDQSPTDIPGHEDDALSEWNE) is disordered. Residues serine 262 and serine 275 each carry the phosphoserine modification.

As to quaternary structure, interacts with CYLC1; the interaction may be relevant for proper acrosome attachment to the nuclear envelope. In terms of processing, N-glycosylated.

It localises to the cytoplasmic vesicle. The protein localises to the secretory vesicle. Its subcellular location is the acrosome inner membrane. Its function is as follows. Plays a role in acrosome expansion and establishment of normal sperm morphology during spermatogenesis. Important for male fertility. The protein is Sperm acrosome membrane-associated protein 1 (SPACA1) of Bos taurus (Bovine).